The primary structure comprises 205 residues: Transcriptional regulator GfcR (205 aa).

It belongs to the purine/pyrimidine phosphoribosyltransferase family. GfcR subfamily.

The polypeptide is Transcriptional regulator GfcR (Methanococcus maripaludis (strain DSM 14266 / JCM 13030 / NBRC 101832 / S2 / LL)).